Reading from the N-terminus, the 272-residue chain is Formamidopyrimidine-DNA glycosylase (272 aa).

Catalysis depends on Pro-2, which acts as the Schiff-base intermediate with DNA. Glu-3 serves as the catalytic Proton donor. Lys-56 acts as the Proton donor; for beta-elimination activity in catalysis. His-89, Arg-108, and Lys-149 together coordinate DNA. The segment at 234–268 adopts an FPG-type zinc-finger fold; sequence LAYGRAGEMCVNCETPLENLKLGQRASVFCPQCQP. The Proton donor; for delta-elimination activity role is filled by Arg-258.

It belongs to the FPG family. As to quaternary structure, monomer. Requires Zn(2+) as cofactor.

The enzyme catalyses Hydrolysis of DNA containing ring-opened 7-methylguanine residues, releasing 2,6-diamino-4-hydroxy-5-(N-methyl)formamidopyrimidine.. It carries out the reaction 2'-deoxyribonucleotide-(2'-deoxyribose 5'-phosphate)-2'-deoxyribonucleotide-DNA = a 3'-end 2'-deoxyribonucleotide-(2,3-dehydro-2,3-deoxyribose 5'-phosphate)-DNA + a 5'-end 5'-phospho-2'-deoxyribonucleoside-DNA + H(+). Its function is as follows. Involved in base excision repair of DNA damaged by oxidation or by mutagenic agents. Acts as a DNA glycosylase that recognizes and removes damaged bases. Has a preference for oxidized purines, such as 7,8-dihydro-8-oxoguanine (8-oxoG). Has AP (apurinic/apyrimidinic) lyase activity and introduces nicks in the DNA strand. Cleaves the DNA backbone by beta-delta elimination to generate a single-strand break at the site of the removed base with both 3'- and 5'-phosphates. This Acinetobacter baylyi (strain ATCC 33305 / BD413 / ADP1) protein is Formamidopyrimidine-DNA glycosylase.